We begin with the raw amino-acid sequence, 2890 residues long: MSKKIPLKNRLRADFTKTPTDLEVPNLLLLQRDSYDSFLYSKEGKESGIEKVFKSIFPIQDEHNRITLEYAGCEFGKSKYTVREAMERGITYSIPLKIKVRLILWEKDTKSGEKNGIKDIKEQSIFIREIPLMTERTSFIINGVERVVVNQLHRSPGVIFKEEESSTSLNKLIYTGQIIPDRGSWLYFEYDSKDVLYARINKRRKVPVTILFRAMDYQKQDIIKMFYPLVKVRYENDKYLIPFASLDANQRMEFDLKDPQGKVILLAGKKLTSRKIKELKENHLEWVEYPMDILLNRHLAEPVMVGKEVLLDMLTQLDKNRLEKIHDLGVQEFVIINDLALGHDASIIQSFSADSESLKLLKQTEKIDDENALAAIRIHKVMKPGDPVTTEVAKQFVKKLFFDPERYDLTMVGRMKMNHKLGLHVPDYITTLTHEDIITTVKYLMKIKNNQGKIDDRDHLGNRRIRAVGELLANELHSGLVKMQKTIKDKLTTMSGTFDSLMPHDLVNSKMITSTIMEFFMGGQLSQFMDQTNPLSEVTHKRRLSALGEGGLVKDRVGFEARDVHPTHYGRICPIETPEGQNIGLINTLSTFTRVNDLGFIEAPYKKVVDGKVVGETIYLTAIQEDSHIIAPASTPIDEEGNILGDLIETRVEGEIVLNEKSKVTLMDLSSSMLVGVAASLIPFLEHDDANRALMGTNMQRQAVPLLRNDAPIVGTGIEKIIARDSWGAIKANRAGVVEKIDSKNIYILGEGKEEAYIDAYSLQKNLRTNQNTSFNQIPIVKVGDKVEAGQIIADGPSMDRGELALGKNVRVAFMPWNGYNFEDAIVVSERITKDDIFTSTHIYEKEVDARELKHGVEEFTADIPDVKEEALAHLDESGIVKVGTYVSAGMILVGKTSPKGEIKSTPEERLLRAIFGDKAGHVVNKSLYCPPSLEGTVIDVKVFTKKGYEKDARVLSAYEEEKAKLDMEHFDRLTMLNREELLRVSSLLSQAILEEPFSHNGKDYKEGDQIPKEEIASINRFTLASLVKKYSKEVQNHYEITKNNFLEQKKVLGEEHEEKLSILEKDDILPNGVIKKVKLYIATKRKLKVGDKMAGRHGNKGIVSNIVPVADMPYTADGEPVDIVLNPLGVPSRMNIGQILEMHLGLVGKEFGKQIASMLEDKTKDFAKELRAKMLEIANAINGKDPLTIHVLESCSDEELLEYAKDWSKGVKMAIPVFEGISQEKFYKLFELAKIAMDGKMDLYDGRTGEKMRERVNVGYMYMIKLHHLVDEKVHARSTGPYSLVTHQPVGGKALFGGQRFGEMEVWALEAYGAAHTLKEMLTIKSDDIRGRENAYRAIAKGEQVGESEIPETFYVLTKELQSLALDINIFGDDVDEDGSPKPIVIKEDDRPKDFSSFQLTLASPEKIHSWSYGEVKKPETINYRTLKPERDGLFCMKIFGPTKDYECLCGKYKKPRFKDIGTCEKCGVAITHSKVRRFRMGHIELATPVAHIWYVNSLPSRIGTLLGVKMKDLERVLYYEAYIVKEPGEAAYDNEGTKLVMKYDILNEEQYQNISRRYEDRGFVAQMGGEAIKDLLEEIDLITLLQSLKEEVKDTNSDAKKKKLIKRLKVVESFLNSGNRPEWMMLTVLPVLPPDLRPLVALDGGKFAVSDVNELYRRVINRNQRLKRLMELGAPEIIVRNEKRMLQEAVDVLFDNGRSTNAVKGANKRPLKSLSEIIKGKQGRFRQNLLGKRVDFSGRSVIVVGPNLKMDECGLPKNMALELFKPHLLSKLEERGYATTLKQAKRMIEQKSNEVWECLQEITEGYPVLLNRAPTLHKQSIQAFHPKLIDGKAIQLHPLVCSAFNADFDGDQMAVHVPLSQEAIAECKVLMLSSMNILLPASGKAVVIPSQDMVLGLYYLSLEKSGVKGEHKLFSSVNEIITAIDTKELDIHAKIRVLDQGNIIATSAGRMIIKSILPDFIPTDLWNRPMKKKDIGVLVDYVHKVGGIGITATFLDNLKTLGFRYATKAGISISMEDIITPKDKQKMVEKAKVEVKKIQQQYDQGLLTDQERYNKIIDTWTEVNDKMSKEMMSTIAQDKEGFNSIYMMADSGARGSAAQIRQLSAMRGLMTKPDGSIIETPIISNFKEGLNVLEYFNSTHGARKGLADTALKTANAGYLTRKLIDVSQNVKVVSDDCGTHEGIEITDIAVGSELIEPLEERIFGRVLLEDVIDPITNEILLYADTLIDEEGAKKVVEAGIKSITIRTPVTCKAPKGVCAKCYGLNLGEGKMSYPGEAVGVVAAQSIGEPGTQLTLRTFHVGGTASRSQDEREIVASKEGFVRFYNLRTYTNKEGKSIIANRRNASILVVEPKIKAPFDGELRIETVYEEVVVSVKNGDQEAKFVLRRSDIVKPSELAGVGGKIEGKVYLPYASGHKVHKGGSIADIIQEGWNVPNRIPYASELLVKDNDPIAQDVYAKEKGAIKYYVLEANHLERTHGIKKGDIVSEKGLFAVIADDNGREAARHYIARGSEILIDDNSEVGANSVISKPTTNTFKTIATWDPYNTPIIADFKGKVGFVDIIAGVTVAEKEDENTGTTSLVVNDYIPSGYKPSLFLEGINGEEVRYFLEPKTSIAISDGVSVEQAEVLAKIPKATVKSRDITGGLPRVSELFEARKPKPKDVAILSEVDGIVSFGKPIRNKEHIIVTSKDGRPMDYFVDKGKQILVHADEFVHAGEAMTDGVVSSHDILRISGEKELYKYIVSEVQQVYRRQGVSIADKHIEIIVSQMLRQVRILDSGDSKFIEGDLVSKKLFKEENARVIALKGEPAIAEPVLLGITRAAIGSDSIISAASFQETTKVLTEASIAMKKDFLEDLKENVVLGRMIPVGTGMYKNKKIVLRTLEDDPKF.

Residues 1–1377 form a DNA-directed RNA polymerase subunit beta region; that stretch reads MSKKIPLKNR…DINIFGDDVD (1377 aa). A DNA-directed RNA polymerase subunit beta' region spans residues 1384 to 2890; sequence PIVIKEDDRP…LRTLEDDPKF (1507 aa). 4 residues coordinate Zn(2+): cysteine 1449, cysteine 1451, cysteine 1465, and cysteine 1468. Mg(2+) contacts are provided by aspartate 1849, aspartate 1851, and aspartate 1853. Cysteine 2179, cysteine 2253, cysteine 2260, and cysteine 2263 together coordinate Zn(2+).

This sequence in the N-terminal section; belongs to the RNA polymerase beta chain family. In the C-terminal section; belongs to the RNA polymerase beta' chain family. In terms of assembly, the RNAP catalytic core consists of 2 alpha, 1 beta/beta' and 1 omega subunit. When a sigma factor is associated with the core the holoenzyme is formed, which can initiate transcription. Mg(2+) is required as a cofactor. It depends on Zn(2+) as a cofactor.

The catalysed reaction is RNA(n) + a ribonucleoside 5'-triphosphate = RNA(n+1) + diphosphate. Functionally, DNA-dependent RNA polymerase catalyzes the transcription of DNA into RNA using the four ribonucleoside triphosphates as substrates. The polypeptide is Bifunctional DNA-directed RNA polymerase subunit beta-beta' (rpoBC) (Helicobacter pylori (strain Shi470)).